The primary structure comprises 203 residues: 3-isopropylmalate dehydratase small subunit (203 aa).

It belongs to the LeuD family. LeuD type 1 subfamily. As to quaternary structure, heterodimer of LeuC and LeuD.

It carries out the reaction (2R,3S)-3-isopropylmalate = (2S)-2-isopropylmalate. Its pathway is amino-acid biosynthesis; L-leucine biosynthesis; L-leucine from 3-methyl-2-oxobutanoate: step 2/4. Its function is as follows. Catalyzes the isomerization between 2-isopropylmalate and 3-isopropylmalate, via the formation of 2-isopropylmaleate. The protein is 3-isopropylmalate dehydratase small subunit of Rhodospirillum centenum (strain ATCC 51521 / SW).